Consider the following 323-residue polypeptide: DNA repair and recombination protein RadA (323 aa).

Residue 114–121 (GEFGSGKT) coordinates ATP.

The protein belongs to the eukaryotic RecA-like protein family.

Its function is as follows. Involved in DNA repair and in homologous recombination. Binds and assemble on single-stranded DNA to form a nucleoprotein filament. Hydrolyzes ATP in a ssDNA-dependent manner and promotes DNA strand exchange between homologous DNA molecules. The sequence is that of DNA repair and recombination protein RadA from Picrophilus torridus (strain ATCC 700027 / DSM 9790 / JCM 10055 / NBRC 100828 / KAW 2/3).